Reading from the N-terminus, the 508-residue chain is Steroid 17-alpha-hydroxylase/17,20 lyase (508 aa).

Cys445 contributes to the heme binding site.

This sequence belongs to the cytochrome P450 family. The cofactor is heme.

It localises to the membrane. The enzyme catalyses a C21-steroid + reduced [NADPH--hemoprotein reductase] + O2 = a 17alpha-hydroxy-C21-steroid + oxidized [NADPH--hemoprotein reductase] + H2O + H(+). The catalysed reaction is 17alpha-hydroxyprogesterone + reduced [NADPH--hemoprotein reductase] + O2 = androst-4-ene-3,17-dione + acetate + oxidized [NADPH--hemoprotein reductase] + H2O + 2 H(+). It catalyses the reaction 17alpha-hydroxypregnenolone + reduced [NADPH--hemoprotein reductase] + O2 = 3beta-hydroxyandrost-5-en-17-one + acetate + oxidized [NADPH--hemoprotein reductase] + H2O + 2 H(+). It functions in the pathway lipid metabolism; steroid biosynthesis. In terms of biological role, conversion of pregnenolone and progesterone to their 17-alpha-hydroxylated products and subsequently to dehydroepiandrosterone (DHEA) and androstenedione. Catalyzes both the 17-alpha-hydroxylation and the 17,20-lyase reaction. This is Steroid 17-alpha-hydroxylase/17,20 lyase (CYP17A1) from Gallus gallus (Chicken).